We begin with the raw amino-acid sequence, 819 residues long: MWGLVRLLLAWLGGWGCMGRLAAPARAWAGSREHPGPALLRTRRSWVWNQFFVIEEYAGPEPVLIGKLHSDVDRGEGRTKYLLTGEGAGTVFVIDEATGNIHVTKSLDREEKAQYVLLAQAVDRASNRPLEPPSEFIIKVQDINDNPPIFPLGPYHATVPEMSNVGTSVIQVTAHDADDPSYGNSAKLVYTVLDGLPFFSVDPQTGVVRTAIPNMDRETQEEFLVVIQAKDMGGHMGGLSGSTTVTVTLSDVNDNPPKFPQSLYQFSVVETAGPGTLVGRLRAQDPDLGDNALMAYSILDGEGSEAFSISTDLQGRDGLLTVRKPLDFESQRSYSFRVEATNTLIDPAYLRRGPFKDVASVRVAVQDAPEPPAFTQAAYHLTVPENKAPGTLVGQISAADLDSPASPIRYSILPHSDPERCFSIQPEEGTIHTAAPLDREARAWHNLTVLATELGWSWGPERGWVPLLVAEWSAPAAPPQRSPVGSAVGIPQDSSAQASRVQVAIQTLDENDNAPQLAEPYDTFVCDSAAPGQLIQVIRALDRDEVGNSSHVSFQGPLGPDANFTVQDNRDGSASLLLPSRPAPPRHAPYLVPIELWDWGQPALSSTATVTVSVCRCQPDGSVASCWPEAHLSAAGLSTGALLAIITCVGALLALVVLFVALRRQKQEALMVLEEEDVRENIITYDDEGGGEEDTEAFDITALQNPDGAAPPAPGPPARRDVLPRARVSRQPRPPGPADVAQLLALRLREADEDPGVPPYDSVQVYGYEGRGSSCGSLSSLGSGSEAGGAPGPAEPLDDWGPLFRTLAELYGAKEPPAP.

The signal sequence occupies residues 1–19 (MWGLVRLLLAWLGGWGCMG). Positions 21-44 (LAAPARAWAGSREHPGPALLRTRR) are excised as a propeptide. Residues 45–641 (SWVWNQFFVI…LSAAGLSTGA (597 aa)) lie on the Extracellular side of the membrane. 5 consecutive Cadherin domains span residues 46–150 (WVWN…PPIF), 151–259 (PLGP…PPKF), 260–374 (PQSL…PPAF), 375–517 (TQAA…APQL), and 517–630 (LAEP…WPEA). Residues Asn446, Asn548, and Asn563 are each glycosylated (N-linked (GlcNAc...) asparagine). Residues 642-662 (LLAIITCVGALLALVVLFVAL) form a helical membrane-spanning segment. Residues 663–819 (RRQKQEALMV…LYGAKEPPAP (157 aa)) lie on the Cytoplasmic side of the membrane. The interval 768–800 (YEGRGSSCGSLSSLGSGSEAGGAPGPAEPLDDW) is disordered. The span at 771-784 (RGSSCGSLSSLGSG) shows a compositional bias: low complexity.

In terms of assembly, associates with alpha-, beta- and delta-catenins.

The protein resides in the cell membrane. Functionally, cadherins are calcium-dependent cell adhesion proteins. They preferentially interact with themselves in a homophilic manner in connecting cells; cadherins may thus contribute to the sorting of heterogeneous cell types. Cadherin-24 mediate strong cell-cell adhesion. The sequence is that of Cadherin-24 (CDH24) from Homo sapiens (Human).